We begin with the raw amino-acid sequence, 445 residues long: Ribosomal protein uS12 methylthiotransferase RimO (445 aa).

One can recognise an MTTase N-terminal domain in the interval 4-119 (IKVALVSLGC…LLESIKVFLK (116 aa)). The [4Fe-4S] cluster site is built by Cys13, Cys48, Cys82, Cys156, Cys160, and Cys163. The region spanning 142–372 (TTPTYTAYVR…MILQQSISKD (231 aa)) is the Radical SAM core domain. One can recognise a TRAM domain in the interval 375–441 (KEKIGKIYEV…EYDLIGVVYN (67 aa)).

It belongs to the methylthiotransferase family. RimO subfamily. Requires [4Fe-4S] cluster as cofactor.

The protein resides in the cytoplasm. It catalyses the reaction L-aspartate(89)-[ribosomal protein uS12]-hydrogen + (sulfur carrier)-SH + AH2 + 2 S-adenosyl-L-methionine = 3-methylsulfanyl-L-aspartate(89)-[ribosomal protein uS12]-hydrogen + (sulfur carrier)-H + 5'-deoxyadenosine + L-methionine + A + S-adenosyl-L-homocysteine + 2 H(+). Catalyzes the methylthiolation of an aspartic acid residue of ribosomal protein uS12. The protein is Ribosomal protein uS12 methylthiotransferase RimO of Clostridium botulinum (strain Langeland / NCTC 10281 / Type F).